Here is a 337-residue protein sequence, read N- to C-terminus: Phenylpyruvate C(3)-methyltransferase (337 aa).

Belongs to the methyltransferase superfamily.

The catalysed reaction is 3-phenylpyruvate + S-adenosyl-L-methionine = (3S)-2-oxo-3-phenylbutanoate + S-adenosyl-L-homocysteine + H(+). It functions in the pathway antibiotic biosynthesis. S-adenosyl-L-methionine-dependent methyltransferase involved in synthesis of the nonproteinogenic amino acid (2S,3S)-beta-methyl-phenylalanine, a building block of the antibiotic mannopeptimycin. This chain is Phenylpyruvate C(3)-methyltransferase (mppJ), found in Streptomyces hygroscopicus.